The sequence spans 581 residues: Proline--tRNA ligase (581 aa).

The protein belongs to the class-II aminoacyl-tRNA synthetase family. ProS type 1 subfamily. Homodimer.

It is found in the cytoplasm. The enzyme catalyses tRNA(Pro) + L-proline + ATP = L-prolyl-tRNA(Pro) + AMP + diphosphate. Catalyzes the attachment of proline to tRNA(Pro) in a two-step reaction: proline is first activated by ATP to form Pro-AMP and then transferred to the acceptor end of tRNA(Pro). As ProRS can inadvertently accommodate and process non-cognate amino acids such as alanine and cysteine, to avoid such errors it has two additional distinct editing activities against alanine. One activity is designated as 'pretransfer' editing and involves the tRNA(Pro)-independent hydrolysis of activated Ala-AMP. The other activity is designated 'posttransfer' editing and involves deacylation of mischarged Ala-tRNA(Pro). The misacylated Cys-tRNA(Pro) is not edited by ProRS. The sequence is that of Proline--tRNA ligase from Rhodococcus erythropolis (strain PR4 / NBRC 100887).